Here is a 1070-residue protein sequence, read N- to C-terminus: Phosphatidylinositol 4,5-bisphosphate 3-kinase catalytic subunit beta isoform (1070 aa).

Positions 26–115 (SDGSISVDFL…LPVLKLVTRS (90 aa)) constitute a PI3K-ABD domain. Residues 194 to 285 (GGKLVVAVHF…RTLPHFILVE (92 aa)) form the PI3K-RBD domain. Residue serine 324 is modified to Phosphoserine. Residues 327–496 (WGNNNPFQIV…NATALHIKFP (170 aa)) form the C2 PI3K-type domain. Residues 410–418 (KVKTKKSTK) carry the Nuclear localization signal (NLS) motif. The 178-residue stretch at 524 to 701 (ANVSSRGGKK…GVILEAYCRG (178 aa)) folds into the PIK helical domain. Residues 772-1053 (YVEKCRYMDS…KFDEALRESW (282 aa)) enclose the PI3K/PI4K catalytic domain. The G-loop stretch occupies residues 778 to 784 (YMDSKMK). Residues 916 to 924 (GIGDRHSDN) form a catalytic loop region. Positions 935 to 961 (HIDFGHILGNFKSKFGIKRERVPFILT) are activation loop. Serine 1070 carries the phosphoserine; by autocatalysis modification.

Belongs to the PI3/PI4-kinase family. Heterodimer of a catalytic subunit PIK3CB and a p85 regulatory subunit (PIK3R1, PIK3R2 or PIK3R3). Interaction with PIK3R2 is required for nuclear localization and nuclear export. Part of a complex with PIK3R1 and PTEN. Binding to PTEN may antagonize the lipid kinase activity under normal growth conditions. Part of a complex involved in autophagosome formation composed of PIK3C3 and PIK3R4. Interacts with BECN1, ATG14 and RAB5A. In terms of processing, autophosphorylation at Ser-1070 negatively regulates the phosphatidylinositol-4,5-bisphosphate 3-kinase activity.

The protein localises to the cytoplasm. It is found in the nucleus. It catalyses the reaction a 1,2-diacyl-sn-glycero-3-phospho-(1D-myo-inositol-4,5-bisphosphate) + ATP = a 1,2-diacyl-sn-glycero-3-phospho-(1D-myo-inositol-3,4,5-trisphosphate) + ADP + H(+). The catalysed reaction is 1-octadecanoyl-2-(5Z,8Z,11Z,14Z)-eicosatetraenoyl-sn-glycero-3-phospho-1D-myo-inositol 4,5-bisphosphate + ATP = 1-octadecanoyl-2-(5Z,8Z,11Z,14Z-eicosatetraenoyl)-sn-glycero-3-phospho-(1D-myo-inositol 3,4,5-triphosphate) + ADP + H(+). It carries out the reaction L-seryl-[protein] + ATP = O-phospho-L-seryl-[protein] + ADP + H(+). It functions in the pathway phospholipid metabolism; phosphatidylinositol phosphate biosynthesis. Phosphoinositide-3-kinase (PI3K) phosphorylates phosphatidylinositol (PI) derivatives at position 3 of the inositol ring to produce 3-phosphoinositides. Uses ATP and PtdIns(4,5)P2 (phosphatidylinositol 4,5-bisphosphate) to generate phosphatidylinositol 3,4,5-trisphosphate (PIP3). PIP3 plays a key role by recruiting PH domain-containing proteins to the membrane, including AKT1 and PDPK1, activating signaling cascades involved in cell growth, survival, proliferation, motility and morphology. Involved in the activation of AKT1 upon stimulation by G-protein coupled receptors (GPCRs) ligands such as CXCL12, sphingosine 1-phosphate, and lysophosphatidic acid. May also act downstream receptor tyrosine kinases. Required in different signaling pathways for stable platelet adhesion and aggregation. Plays a role in platelet activation signaling triggered by GPCRs, alpha-IIb/beta-3 integrins (ITGA2B/ ITGB3) and ITAM (immunoreceptor tyrosine-based activation motif)-bearing receptors such as GP6. Regulates the strength of adhesion of ITGA2B/ ITGB3 activated receptors necessary for the cellular transmission of contractile forces. Required for platelet aggregation induced by F2 (thrombin) and thromboxane A2 (TXA2). Has a role in cell survival. May have a role in cell migration. Involved in the early stage of autophagosome formation. Modulates the intracellular level of PtdIns3P (phosphatidylinositol 3-phosphate) and activates PIK3C3 kinase activity. May act as a scaffold, independently of its lipid kinase activity to positively regulate autophagy. May have a role in insulin signaling as scaffolding protein in which the lipid kinase activity is not required. May have a kinase-independent function in regulating cell proliferation and in clathrin-mediated endocytosis. Mediator of oncogenic signal in cell lines lacking PTEN. The lipid kinase activity is necessary for its role in oncogenic transformation. Required for the growth of ERBB2 and RAS driven tumors. Also has a protein kinase activity showing autophosphorylation. The chain is Phosphatidylinositol 4,5-bisphosphate 3-kinase catalytic subunit beta isoform (Pik3cb) from Rattus norvegicus (Rat).